Here is a 1170-residue protein sequence, read N- to C-terminus: PAN2-PAN3 deadenylation complex catalytic subunit PAN2 (1170 aa).

WD repeat units lie at residues 104-144 (ENMK…IIKQ) and 280-319 (NISS…HFTD). The tract at residues 319 to 458 (DMAIPIELPE…DPNEIESLKP (140 aa)) is linker. A disordered region spans residues 399-459 (RRNQVEDTRN…PNEIESLKPE (61 aa)). A compositionally biased stretch (acidic residues) spans 443–452 (VDQEPEDPNE). The 388-residue stretch at 459-846 (EAPPLYRNLE…MPAVLLFQIK (388 aa)) folds into the USP domain. The 174-residue stretch at 894-1067 (VALDTEFVSL…EDARTALKLY (174 aa)) folds into the Exonuclease domain. Residues Asp-897, Glu-899, Asp-1006, and Asp-1059 each coordinate a divalent metal cation. The segment at 1094–1170 (NFKPPRREDR…PSKASSPLPK (77 aa)) is disordered. The segment covering 1098–1108 (PRREDREKELQ) has biased composition (basic and acidic residues). Residues 1109–1119 (RQSTPPNSTAP) are compositionally biased toward polar residues.

Belongs to the peptidase C19 family. PAN2 subfamily. Forms a heterotrimer with an asymmetric homodimer of the regulatory subunit PAN3 to form the poly(A)-nuclease (PAN) deadenylation complex. A divalent metal cation serves as cofactor.

Its subcellular location is the cytoplasm. It catalyses the reaction Exonucleolytic cleavage of poly(A) to 5'-AMP.. Its activity is regulated as follows. Positively regulated by the regulatory subunit PAN3. In terms of biological role, catalytic subunit of the poly(A)-nuclease (PAN) deadenylation complex, one of two cytoplasmic mRNA deadenylases involved in mRNA turnover. PAN specifically shortens poly(A) tails of RNA and the activity is stimulated by poly(A)-binding protein PAB1. PAN deadenylation is followed by rapid degradation of the shortened mRNA tails by the CCR4-NOT complex. Deadenylated mRNAs are then degraded by two alternative mechanisms, namely exosome-mediated 3'-5' exonucleolytic degradation, or deadenylation-dependent mRNA decaping and subsequent 5'-3' exonucleolytic degradation by XRN1. May also be involved in post-transcriptional maturation of mRNA poly(A) tails. The sequence is that of PAN2-PAN3 deadenylation complex catalytic subunit PAN2 from Chaetomium thermophilum (strain DSM 1495 / CBS 144.50 / IMI 039719) (Thermochaetoides thermophila).